We begin with the raw amino-acid sequence, 50 residues long: Insulin-1 (50 aa).

Intrachain disulfides connect cysteine 7–cysteine 36, cysteine 19–cysteine 49, and cysteine 35–cysteine 40.

The protein belongs to the insulin family. As to quaternary structure, heterodimer of a B chain and an A chain linked by two disulfide bonds.

The protein localises to the secreted. Its function is as follows. Insulin decreases blood glucose concentration. It increases cell permeability to monosaccharides, amino acids and fatty acids. It accelerates glycolysis, the pentose phosphate cycle, and glycogen synthesis in liver. This chain is Insulin-1, found in Katsuwonus pelamis (Skipjack tuna).